The primary structure comprises 145 residues: D-aminoacyl-tRNA deacylase (145 aa).

The short motif at Gly-137–Pro-138 is the Gly-cisPro motif, important for rejection of L-amino acids element.

Belongs to the DTD family. As to quaternary structure, homodimer.

The protein localises to the cytoplasm. The enzyme catalyses glycyl-tRNA(Ala) + H2O = tRNA(Ala) + glycine + H(+). It catalyses the reaction a D-aminoacyl-tRNA + H2O = a tRNA + a D-alpha-amino acid + H(+). Its function is as follows. An aminoacyl-tRNA editing enzyme that deacylates mischarged D-aminoacyl-tRNAs. Also deacylates mischarged glycyl-tRNA(Ala), protecting cells against glycine mischarging by AlaRS. Acts via tRNA-based rather than protein-based catalysis; rejects L-amino acids rather than detecting D-amino acids in the active site. By recycling D-aminoacyl-tRNA to D-amino acids and free tRNA molecules, this enzyme counteracts the toxicity associated with the formation of D-aminoacyl-tRNA entities in vivo and helps enforce protein L-homochirality. The sequence is that of D-aminoacyl-tRNA deacylase from Shewanella amazonensis (strain ATCC BAA-1098 / SB2B).